Reading from the N-terminus, the 101-residue chain is Small ribosomal subunit protein uS14 (101 aa).

Belongs to the universal ribosomal protein uS14 family. In terms of assembly, part of the 30S ribosomal subunit. Contacts proteins S3 and S10.

Its function is as follows. Binds 16S rRNA, required for the assembly of 30S particles and may also be responsible for determining the conformation of the 16S rRNA at the A site. In Shewanella denitrificans (strain OS217 / ATCC BAA-1090 / DSM 15013), this protein is Small ribosomal subunit protein uS14.